The sequence spans 768 residues: Translation initiation factor IF-2, chloroplastic (768 aa).

3 disordered regions span residues 1-20 (MFLN…SNIN), 54-77 (KSES…DKKS), and 155-176 (KKVA…PPES). The segment covering 54 to 65 (KSESHTGGEQHL) has biased composition (basic and acidic residues). Residues 160 to 176 (TPSQNSASIQSNSPPES) are compositionally biased toward polar residues. Residues 261-434 (KRPPIVTVMG…TLLAELEDLK (174 aa)) enclose the tr-type G domain. Residues 270-277 (GHVDHGKT), 320-324 (DTPGH), and 374-377 (SKID) contribute to the GTP site.

The protein belongs to the TRAFAC class translation factor GTPase superfamily. Classic translation factor GTPase family. IF-2 subfamily.

The protein resides in the plastid. The protein localises to the chloroplast. Its function is as follows. One of the essential components for the initiation of protein synthesis. Protects formylmethionyl-tRNA from spontaneous hydrolysis and promotes its binding to the 30S ribosomal subunits. Also involved in the hydrolysis of GTP during the formation of the 70S ribosomal complex. The sequence is that of Translation initiation factor IF-2, chloroplastic (infB) from Pyropia yezoensis (Susabi-nori).